We begin with the raw amino-acid sequence, 333 residues long: D-glutamate N-acetyltransferase (333 aa).

The protein belongs to the N-acetyltransferase DgcN family.

The catalysed reaction is D-glutamate + acetyl-CoA = N-acetyl-D-glutamate + CoA + H(+). The protein operates within amino-acid degradation. In terms of biological role, N-acetyltransferase involved in a deamination-independent D-glutamate degradation pathway, named the DgcN-DgcA pathway. Catalyzes the transfer of the acetyl moiety from acetyl-CoA to D-glutamate to generate N-acetyl-D-glutamate. This is D-glutamate N-acetyltransferase from Tritonibacter scottomollicae (Epibacterium scottomollicae).